The following is a 220-amino-acid chain: Germin-like protein subfamily T member 2 (220 aa).

A signal peptide spans 1–27 (MTTLQISSSLFRSFLLVICVFVIPSLS). Cys37 and Cys52 are oxidised to a cystine. Positions 64–212 (SGLGGPLNTS…TFRTDDVTVN (149 aa)) constitute a Cupin type-1 domain. A glycan (N-linked (GlcNAc...) asparagine) is linked at Asn71. Mn(2+) is bound by residues His112, His114, and Glu119. A glycan (N-linked (GlcNAc...) asparagine) is linked at Asn136. His158 lines the Mn(2+) pocket.

This sequence belongs to the germin family. In terms of assembly, oligomer (believed to be a pentamer but probably hexamer).

The protein localises to the secreted. It is found in the extracellular space. The protein resides in the apoplast. Its function is as follows. May play a role in plant defense. Probably has no oxalate oxidase activity even if the active site is conserved. This Arabidopsis thaliana (Mouse-ear cress) protein is Germin-like protein subfamily T member 2.